A 542-amino-acid chain; its full sequence is Chaperonin GroEL (542 aa).

ATP contacts are provided by residues 29–32 (TLGP), 86–90 (DGTTT), Gly413, 477–479 (NAA), and Asp493.

It belongs to the chaperonin (HSP60) family. Forms a cylinder of 14 subunits composed of two heptameric rings stacked back-to-back. Interacts with the co-chaperonin GroES.

The protein resides in the cytoplasm. The enzyme catalyses ATP + H2O + a folded polypeptide = ADP + phosphate + an unfolded polypeptide.. In terms of biological role, together with its co-chaperonin GroES, plays an essential role in assisting protein folding. The GroEL-GroES system forms a nano-cage that allows encapsulation of the non-native substrate proteins and provides a physical environment optimized to promote and accelerate protein folding. This chain is Chaperonin GroEL, found in Heliobacterium modesticaldum (strain ATCC 51547 / Ice1).